The following is a 445-amino-acid chain: Coronin-A (445 aa).

4 WD repeats span residues 77–117 (GHKS…LTDS), 127–167 (GHKR…NLTT), 170–209 (GHSDMITSCEWNHNGSQIVTTCKDKKARVFDPRTNSIVNE), and 259–299 (DSAS…PYIH). The stretch at 410–444 (KNEKELREEYEKLKIRVAYLESEIVKKDAKIKELT) forms a coiled coil.

This sequence belongs to the WD repeat coronin family. As to quaternary structure, binds to F-actin.

It localises to the cell surface. Required for normal motility. Participates in cytokinesis. This Dictyostelium discoideum (Social amoeba) protein is Coronin-A (corA).